A 175-amino-acid chain; its full sequence is MRDRRSSYEYEDLLACGRGELFGPGNAQLPLPPMLMFDRITEISETGGAHGKGLIRAELDVNPDLWFFACHFKGDPVMPGCLGLDALWQMLGFFLGWSGGEGPGRALGSGELKFTGQVLPHVRKVVYNVDIKRVMRSKLWLGIADGWLSADDEIIYRAQDLKVGLFKQTAAKPAA.

His-71 is a catalytic residue.

The protein belongs to the thioester dehydratase family. FabA subfamily. In terms of assembly, homodimer.

It localises to the cytoplasm. It catalyses the reaction a (3R)-hydroxyacyl-[ACP] = a (2E)-enoyl-[ACP] + H2O. It carries out the reaction (3R)-hydroxydecanoyl-[ACP] = (2E)-decenoyl-[ACP] + H2O. The catalysed reaction is (2E)-decenoyl-[ACP] = (3Z)-decenoyl-[ACP]. The protein operates within lipid metabolism; fatty acid biosynthesis. Necessary for the introduction of cis unsaturation into fatty acids. Catalyzes the dehydration of (3R)-3-hydroxydecanoyl-ACP to E-(2)-decenoyl-ACP and then its isomerization to Z-(3)-decenoyl-ACP. Can catalyze the dehydratase reaction for beta-hydroxyacyl-ACPs with saturated chain lengths up to 16:0, being most active on intermediate chain length. The chain is 3-hydroxydecanoyl-[acyl-carrier-protein] dehydratase from Rhodopseudomonas palustris (strain BisB5).